The following is a 721-amino-acid chain: Protein Hook homolog 2 (721 aa).

The Calponin-homology (CH) domain occupies 7-123; it reads VELCDSLLTW…KMVQLVLGCA (117 aa). Coiled-coil stretches lie at residues 181-425 and 484-659; these read LSED…RCSH and DLQN…EKLI. The interval 696 to 721 is disordered; that stretch reads TNARRGQISRSHTLLPRYTDKRQSLS.

The protein belongs to the hook family. In terms of assembly, interacts with microtubules.

The protein localises to the cytoplasm. Its subcellular location is the cytoskeleton. It localises to the microtubule organizing center. The protein resides in the centrosome. In terms of biological role, may function to promote vesicle trafficking and/or fusion. May contribute to the establishment and maintenance of centrosome function. The sequence is that of Protein Hook homolog 2 (hook2) from Xenopus laevis (African clawed frog).